A 360-amino-acid polypeptide reads, in one-letter code: Cyclin-dependent kinase 10 (360 aa).

The Protein kinase domain maps to phenylalanine 39–phenylalanine 323. ATP is bound by residues isoleucine 45 to valine 53 and lysine 68. Catalysis depends on aspartate 163, which acts as the Proton acceptor. At threonine 196 the chain carries Phosphothreonine. Positions leucine 334–proline 360 are disordered.

It belongs to the protein kinase superfamily. CMGC Ser/Thr protein kinase family. CDC2/CDKX subfamily. In terms of assembly, heterodimer with CCNQ, the interaction is required for kinase activity. Interacts with ETS2. Interacts with PRK2.

Its subcellular location is the cytoplasm. It localises to the cytoskeleton. It is found in the cilium basal body. The enzyme catalyses L-seryl-[protein] + ATP = O-phospho-L-seryl-[protein] + ADP + H(+). It carries out the reaction L-threonyl-[protein] + ATP = O-phospho-L-threonyl-[protein] + ADP + H(+). Cyclin-dependent kinase that phosphorylates the transcription factor ETS2 (in vitro) and positively controls its proteasomal degradation (in cells). Involved in the regulation of actin cytoskeleton organization through the phosphorylation of actin dynamics regulators such as PKN2. Is a negative regulator of ciliogenesis through phosphorylation of PKN2 and promotion of RhoA signaling. The protein is Cyclin-dependent kinase 10 (CDK10) of Homo sapiens (Human).